Consider the following 381-residue polypeptide: cAMP-dependent protein kinase type I-alpha regulatory subunit (381 aa).

The residue at position 1 (Met1) is an N-acetylmethionine. Ala2 is subject to N-acetylalanine; in cAMP-dependent protein kinase type I-alpha regulatory subunit, N-terminally processed. Residues Ala2–Val136 are dimerization and phosphorylation. At Ser3 the chain carries Phosphoserine. The tract at residues Ile73 to Arg96 is disordered. Phosphothreonine is present on Thr75. 2 positions are modified to phosphoserine: Ser77 and Ser83. Positions Arg96–Ile100 match the Pseudophosphorylation motif motif. Ser101 carries the phosphoserine modification. Residues Leu137–Ser254, Glu202, Arg211, Ile255–Val381, Glu326, and Arg335 contribute to the 3',5'-cyclic AMP site. Position 258 is a phosphoserine (Ser258).

This sequence belongs to the cAMP-dependent kinase regulatory chain family. The inactive holoenzyme is composed of two regulatory chains and two catalytic chains. Activation by cAMP releases the two active catalytic monomers and the regulatory dimer. Interacts with PRKACA and PRKACB. PRKAR1A also interacts with RFC2; the complex may be involved in cell survival. Interacts with AKAP4. Interacts with RARA; the interaction occurs in the presence of cAMP or FSH and regulates RARA transcriptional activity. Interacts with the phosphorylated form of PJA2. Interacts with PRKX; regulates this cAMP-dependent protein kinase. Interacts with CBFA2T3. Interacts with smAKAP; this interaction may target PRKAR1A to the plasma membrane. Interacts with AICDA. Post-translationally, the pseudophosphorylation site binds to the substrate-binding region of the catalytic chain, resulting in the inhibition of its activity.

The protein localises to the cell membrane. In terms of biological role, regulatory subunit of the cAMP-dependent protein kinases involved in cAMP signaling in cells. The protein is cAMP-dependent protein kinase type I-alpha regulatory subunit (Prkar1a) of Mus musculus (Mouse).